A 217-amino-acid chain; its full sequence is Magnetosome protein MamA (217 aa).

TPR repeat units lie at residues 12 to 44, 46 to 79, 80 to 113, 114 to 147, 148 to 181, and 182 to 215; these read VTLY…NDDI, QVYY…DAFD, VEVA…APDN, IKVA…NPVN, FNVR…RPNE, and GKVH…DERS. Positions 41–112 are N-terminal domain; that stretch reads NDDIRQVYYR…LERSIADAPD (72 aa). Positions 113–217 are C-terminal domain; sequence NIKVATVLGL…ANELDERSAV (105 aa).

This sequence belongs to the magnetosome MamA family. In terms of assembly, forms round, 20 nm diameter complexes with a central cavity. Probably binds MamC. Interacts with full-length Mms6.

It is found in the magnetosome membrane. Its function is as follows. Probably forms a large homooligomer on which other magnetosome subunits assemble. Required for formation of functional magnetosomes from pre-existing vesicles. The polypeptide is Magnetosome protein MamA (Magnetospirillum gryphiswaldense (strain DSM 6361 / JCM 21280 / NBRC 15271 / MSR-1)).